The chain runs to 698 residues: Endogenous retrovirus group K member 9 Env polyprotein (698 aa).

Residues 1-47 (MNPSEMQRKAPPRRRRHRNRAPLTHKMNKMVTSEEQMKLPSTKKAEP) form a disordered region. Residues 1-89 (MNPSEMQRKA…ALMIVSMVVS (89 aa)) form the signal peptide. A compositionally biased stretch (basic residues) spans 10 to 20 (APPRRRRHRNR). Residues 90-631 (LPMPAGAAAA…NLNPVTWVKT (542 aa)) lie on the Extracellular side of the membrane. N-linked (GlcNAc...) asparagine glycans are attached at residues Asn-100, Asn-128, Asn-153, Asn-273, Asn-354, Asn-371, and Asn-460. A fusion peptide region spans residues 465–485 (FIFTLIAVIMGLIAVTATAAV). Residues Asn-506, Asn-553, Asn-565, and Asn-584 are each glycosylated (N-linked (GlcNAc...) asparagine). The chain crosses the membrane as a helical span at residues 632–652 (IGSTTIINLILILVCLFCLLL). Topologically, residues 653–698 (VCRCTQQLRRDSDHRERAMMTMAVLSKRKGGNVGKSKRDQIVTVSV) are cytoplasmic.

It belongs to the beta type-B retroviral envelope protein family. HERV class-II K(HML-2) env subfamily. The surface (SU) and transmembrane (TM) proteins form a heterodimer. SU and TM are attached by noncovalent interactions or by a labile interchain disulfide bond. Specific enzymatic cleavages in vivo yield the mature SU and TM proteins.

It is found in the cell membrane. Its subcellular location is the virion. Functionally, retroviral envelope proteins mediate receptor recognition and membrane fusion during early infection. Endogenous envelope proteins may have kept, lost or modified their original function during evolution. This endogenous envelope protein has lost its original fusogenic properties. In terms of biological role, SU mediates receptor recognition. TM anchors the envelope heterodimer to the viral membrane through one transmembrane domain. The other hydrophobic domain, called fusion peptide, mediates fusion of the viral membrane with the target cell membrane. This is Endogenous retrovirus group K member 9 Env polyprotein (ERVK-9) from Homo sapiens (Human).